We begin with the raw amino-acid sequence, 415 residues long: Putative FNIP repeat-containing protein L415 (415 aa).

Residues 148–185 (FIKKGAIPDSVTHLYFGSDYLSKDIIPKNVVYLRFGDF) form an FNIP repeat.

The polypeptide is Putative FNIP repeat-containing protein L415 (Acanthamoeba polyphaga mimivirus (APMV)).